Consider the following 312-residue polypeptide: uncharacterized protein (312 aa).

Positions 1-28 (MNSADTQEPKSFNHTDMWTAFGTTMSGA) are cleaved as a signal peptide.

In terms of biological role, the FAS-operon encodes genes involved in cytokinin production and in host plant fasciation (leafy gall). This is an uncharacterized protein from Rhodococcoides fascians (Rhodococcus fascians).